The following is a 321-amino-acid chain: Sideroflexin-3 (321 aa).

Met1 is modified (N-acetylmethionine). The next 4 helical transmembrane spans lie at 146–164 (LGTA…ALGL), 174–194 (LVGR…NIPL), 226–246 (FQVV…PPLI), and 266–286 (LQVG…CALF).

The protein belongs to the sideroflexin family.

Its subcellular location is the mitochondrion membrane. The enzyme catalyses L-serine(in) = L-serine(out). Its function is as follows. Mitochondrial serine transporter that mediates transport of serine into mitochondria, an important step of the one-carbon metabolism pathway. Mitochondrial serine is converted to glycine and formate, which then exits to the cytosol where it is used to generate the charged folates that serve as one-carbon donors. The chain is Sideroflexin-3 from Homo sapiens (Human).